The sequence spans 205 residues: Guanylate kinase (205 aa).

One can recognise a Guanylate kinase-like domain in the interval Pro18–Ile196. Position 25 to 32 (Ala25 to Thr32) interacts with ATP.

The protein belongs to the guanylate kinase family.

Its subcellular location is the cytoplasm. It catalyses the reaction GMP + ATP = GDP + ADP. Functionally, essential for recycling GMP and indirectly, cGMP. The chain is Guanylate kinase (gmk) from Chlamydia trachomatis serovar D (strain ATCC VR-885 / DSM 19411 / UW-3/Cx).